A 209-amino-acid chain; its full sequence is Large ribosomal subunit protein bL25 (209 aa).

The disordered stretch occupies residues 190-209 (PDASAAPVAAPAAPAKKGKK).

Belongs to the bacterial ribosomal protein bL25 family. CTC subfamily. Part of the 50S ribosomal subunit; part of the 5S rRNA/L5/L18/L25 subcomplex. Contacts the 5S rRNA. Binds to the 5S rRNA independently of L5 and L18.

Its function is as follows. This is one of the proteins that binds to the 5S RNA in the ribosome where it forms part of the central protuberance. The protein is Large ribosomal subunit protein bL25 of Delftia acidovorans (strain DSM 14801 / SPH-1).